The following is a 369-amino-acid chain: Phosphatidylglycerol--prolipoprotein diacylglyceryl transferase (369 aa).

The next 3 helical transmembrane spans lie at 26 to 46, 60 to 80, and 97 to 117; these read YYGILYATGILVAIIAGILTL, YVFIGIISIIFGARTWSFIIG, and LAIQGGVIFTITTGLIFFFFI. Arginine 167 contacts a 1,2-diacyl-sn-glycero-3-phospho-(1'-sn-glycerol). A run of 2 helical transmembrane segments spans residues 216-236 and 273-293; these read VPIFLIESFFNVIAFIIIVFL and FVTSIVTSVLFLLGGSIGFIF.

It belongs to the Lgt family.

Its subcellular location is the cell membrane. The catalysed reaction is L-cysteinyl-[prolipoprotein] + a 1,2-diacyl-sn-glycero-3-phospho-(1'-sn-glycerol) = an S-1,2-diacyl-sn-glyceryl-L-cysteinyl-[prolipoprotein] + sn-glycerol 1-phosphate + H(+). It functions in the pathway protein modification; lipoprotein biosynthesis (diacylglyceryl transfer). Functionally, catalyzes the transfer of the diacylglyceryl group from phosphatidylglycerol to the sulfhydryl group of the N-terminal cysteine of a prolipoprotein, the first step in the formation of mature lipoproteins. The sequence is that of Phosphatidylglycerol--prolipoprotein diacylglyceryl transferase from Mycoplasmoides gallisepticum (strain R(low / passage 15 / clone 2)) (Mycoplasma gallisepticum).